Consider the following 141-residue polypeptide: Galactose-6-phosphate isomerase subunit LacA (141 aa).

The protein belongs to the LacAB/RpiB family. In terms of assembly, heteromultimeric protein consisting of LacA and LacB.

It catalyses the reaction aldehydo-D-galactose 6-phosphate = keto-D-tagatose 6-phosphate. The protein operates within carbohydrate metabolism; D-galactose 6-phosphate degradation; D-tagatose 6-phosphate from D-galactose 6-phosphate: step 1/1. This is Galactose-6-phosphate isomerase subunit LacA from Streptococcus pneumoniae (strain P1031).